The following is a 152-amino-acid chain: Transcriptional regulator MraZ (152 aa).

SpoVT-AbrB domains are found at residues 5-52 (LNPI…THPQ) and 81-124 (ATEV…GKSQ).

The protein belongs to the MraZ family. As to quaternary structure, forms oligomers.

It localises to the cytoplasm. It is found in the nucleoid. The protein is Transcriptional regulator MraZ of Coxiella burnetii (strain Dugway 5J108-111).